Reading from the N-terminus, the 477-residue chain is Alanine--glyoxylate aminotransferase 2 homolog 2, mitochondrial (477 aa).

The transit peptide at 1-22 directs the protein to the mitochondrion; it reads MQRFAAKRSVQNISVSLWRRCI. Residues 165 to 166, tyrosine 192, and 292 to 295 contribute to the pyridoxal 5'-phosphate site; these read GT and DEVQ. Lysine 321 is modified (N6-(pyridoxal phosphate)lysine). Position 350 (threonine 350) interacts with pyridoxal 5'-phosphate.

The protein belongs to the class-III pyridoxal-phosphate-dependent aminotransferase family. As to quaternary structure, homotetramer. Interacts with GRF3. The cofactor is pyridoxal 5'-phosphate.

It localises to the mitochondrion. The catalysed reaction is glyoxylate + L-alanine = glycine + pyruvate. The sequence is that of Alanine--glyoxylate aminotransferase 2 homolog 2, mitochondrial (AGT3) from Arabidopsis thaliana (Mouse-ear cress).